Reading from the N-terminus, the 201-residue chain is Probable nicotinate-nucleotide adenylyltransferase (201 aa).

It belongs to the NadD family.

It carries out the reaction nicotinate beta-D-ribonucleotide + ATP + H(+) = deamido-NAD(+) + diphosphate. The protein operates within cofactor biosynthesis; NAD(+) biosynthesis; deamido-NAD(+) from nicotinate D-ribonucleotide: step 1/1. Its function is as follows. Catalyzes the reversible adenylation of nicotinate mononucleotide (NaMN) to nicotinic acid adenine dinucleotide (NaAD). This Clostridium botulinum (strain Kyoto / Type A2) protein is Probable nicotinate-nucleotide adenylyltransferase.